We begin with the raw amino-acid sequence, 95 residues long: MTKSELIETLAQQHAHVPVKDVENAVKEILEQMAGSLSSSDRIEIRGFGSFSLHYRAPRTGRNPKTGETVELDGKHVPHFKPGKELRDRVNESIA.

The disordered stretch occupies residues 56–95; that stretch reads RAPRTGRNPKTGETVELDGKHVPHFKPGKELRDRVNESIA. Residues 72 to 95 show a composition bias toward basic and acidic residues; it reads LDGKHVPHFKPGKELRDRVNESIA.

It belongs to the bacterial histone-like protein family. As to quaternary structure, heterodimer of an alpha and a beta chain.

Functionally, this protein is one of the two subunits of integration host factor, a specific DNA-binding protein that functions in genetic recombination as well as in transcriptional and translational control. This chain is Integration host factor subunit beta, found in Pseudoalteromonas translucida (strain TAC 125).